We begin with the raw amino-acid sequence, 246 residues long: Probable transcriptional regulatory protein Rmag_0394 (246 aa).

This sequence belongs to the TACO1 family.

Its subcellular location is the cytoplasm. This is Probable transcriptional regulatory protein Rmag_0394 from Ruthia magnifica subsp. Calyptogena magnifica.